The chain runs to 710 residues: Amyloid beta precursor protein binding family B member 1 (710 aa).

Positions 1 to 15 (MSVPSSLSQSAINAN) are enriched in polar residues. 4 disordered regions span residues 1 to 24 (MSVPSSLSQSAINANSHGGPALSL), 131 to 254 (GLRG…TDSD), 276 to 299 (GTTQWEPPGRASPSQGSSPQEESQ), and 340 to 365 (TFPAQSLSPEPLPQEEEKLPPRNTNP). The segment covering 145 to 173 (GPDEGEEKAAGEAEEEEEDDDDEEEEEDL) has biased composition (acidic residues). Lys-204 carries the N6-acetyllysine modification. The segment covering 223 to 234 (SWATLSQGSPSY) has biased composition (polar residues). Residues 253-285 (SDLPAGWMRVQDTSGTYYWHIPTGTTQWEPPGR) form the WW domain. The span at 287–299 (SPSQGSSPQEESQ) shows a compositional bias: low complexity. The PID 1 domain maps to 370 to 509 (FAVRSLGWVE…SKIMAERRNA (140 aa)). Ser-459 carries the post-translational modification Phosphoserine; by PKC. Ser-517 is subject to Phosphoserine. Positions 542-699 (KFQVYYLGNV…RRGVQSLWGS (158 aa)) constitute a PID 2 domain. A Phosphotyrosine; by ABL1 modification is found at Tyr-547. A Phosphoserine; by SGK1 modification is found at Ser-610. Position 701 is an N6-acetyllysine (Lys-701).

As to quaternary structure, component of a complex, at least composed of APBB1, RASD1/DEXRAS1 and APP. Interacts (via PID domain 2) with APP (with the intracellular domain of the amyloid-beta precursor protein). Interacts (via PID domain 2) with RASD1/DEXRAS1; impairs the transcription activation activity. Interacts (via PID domain 1) with KAT5/TIP60. Interacts (via the WW domain) with the proline-rich region of APBB1IP. Interacts with TSHZ1 and TSHZ2. Interacts (via the WW domain) with histone H2AX (when phosphorylated on 'Tyr-142') and the proline-rich region of ENAH. Interacts with MAPK8. Interacts (via PID domain 1) with TSHZ3 (via homeobox domain). Interacts with SET. Found in a trimeric complex with HDAC1 and TSHZ3; the interaction between HDAC1 and APBB1 is mediated by TSHZ3. Interacts (via WWW domain) with NEK6. Interacts (via WWW domain) with ABL1. Interacts with RNF157. Interacts with ARF6. Phosphorylation at Ser-610 by SGK1 promotes its localization to the nucleus. Phosphorylated following nuclear translocation. Phosphorylation at Tyr-547 by ABL1 enhances transcriptional activation activity and reduces the affinity for RASD1/DEXRAS1. Phosphorylated at Ser-459 by PKC upon insulin activation. In terms of processing, acetylation at Lys-204 and Lys-701 by KAT5 promotes its transcription activator activity. Post-translationally, polyubiquitination by RNF157 leads to degradation by the proteasome. As to expression, highly expressed in brain; strongly reduced in post-mortem elderly subjects with Alzheimer disease. Expressed preferentially in the brain.

The protein resides in the cell membrane. It localises to the cytoplasm. Its subcellular location is the nucleus. It is found in the cell projection. The protein localises to the growth cone. The protein resides in the nucleus speckle. Transcription coregulator that can have both coactivator and corepressor functions. Adapter protein that forms a transcriptionally active complex with the gamma-secretase-derived amyloid precursor protein (APP) intracellular domain. Plays a central role in the response to DNA damage by translocating to the nucleus and inducing apoptosis. May act by specifically recognizing and binding histone H2AX phosphorylated on 'Tyr-142' (H2AXY142ph) at double-strand breaks (DSBs), recruiting other pro-apoptosis factors such as MAPK8/JNK1. Required for histone H4 acetylation at double-strand breaks (DSBs). Its ability to specifically bind modified histones and chromatin modifying enzymes such as KAT5/TIP60, probably explains its transcription activation activity. Functions in association with TSHZ3, SET and HDAC factors as a transcriptional repressor, that inhibits the expression of CASP4. Associates with chromatin in a region surrounding the CASP4 transcriptional start site(s). Involved in hippocampal neurite branching and neuromuscular junction formation, as a result plays a role in spatial memory functioning. Plays a role in the maintenance of lens transparency. May play a role in muscle cell strength. Acts as a molecular adapter that functions in neurite outgrowth by activating the RAC1-ARF6 axis upon insulin treatment. The sequence is that of Amyloid beta precursor protein binding family B member 1 from Homo sapiens (Human).